The primary structure comprises 209 residues: Guanylate kinase (209 aa).

In terms of domain architecture, Guanylate kinase-like spans 7-185 (GNLYIVAAPS…AAMELQSIVI (179 aa)). 14 to 21 (APSGGGKT) is a binding site for ATP.

It belongs to the guanylate kinase family.

It localises to the cytoplasm. The enzyme catalyses GMP + ATP = GDP + ADP. Functionally, essential for recycling GMP and indirectly, cGMP. This chain is Guanylate kinase, found in Legionella pneumophila (strain Paris).